Here is a 107-residue protein sequence, read N- to C-terminus: Keratin, type I cytoskeletal 20 (107 aa).

Residues 1-7 are head; that stretch reads GNLWVGN. Residues 8-43 form a coil 1A region; it reads EKMTMKNLNDRLASYLEKVRSLEQSNSKFELQIKQW. In terms of domain architecture, IF rod spans 8–107; the sequence is EKMTMKNLND…ETERGIRLAV (100 aa). Residues 44–61 form a linker 1 region; the sequence is YESNTPGISRDHSAYLQQ. Residues 62 to 107 are coil 1B; the sequence is IQDLRNQIRDAQLQNARCVLQIDNAKLAAEDFRLKYETERGIRLAV.

The protein belongs to the intermediate filament family. As to quaternary structure, heterotetramer of two type I and two type II keratins. Associates with KRT8.

In terms of biological role, plays a significant role in maintaining keratin filament organization in intestinal epithelia. When phosphorylated, plays a role in the secretion of mucin in the small intestine. The chain is Keratin, type I cytoskeletal 20 from Sus scrofa (Pig).